A 58-amino-acid polypeptide reads, in one-letter code: Large ribosomal subunit protein bL32 (58 aa).

It belongs to the bacterial ribosomal protein bL32 family.

This is Large ribosomal subunit protein bL32 from Carboxydothermus hydrogenoformans (strain ATCC BAA-161 / DSM 6008 / Z-2901).